Consider the following 183-residue polypeptide: UPF0397 protein stu0306/stu0307 (183 aa).

The next 5 helical transmembrane spans lie at 11–31, 44–64, 74–94, 111–131, and 149–169; these read ATGI…IPIF, VLFS…GFIG, GDIS…IGLF, IWFN…VTPI, and FVAG…LLAI.

The protein belongs to the UPF0397 family.

It localises to the cell membrane. The protein is UPF0397 protein stu0306/stu0307 of Streptococcus thermophilus (strain ATCC BAA-250 / LMG 18311).